The chain runs to 290 residues: ATP synthase gamma chain (290 aa).

Belongs to the ATPase gamma chain family. In terms of assembly, F-type ATPases have 2 components, CF(1) - the catalytic core - and CF(0) - the membrane proton channel. CF(1) has five subunits: alpha(3), beta(3), gamma(1), delta(1), epsilon(1). CF(0) has three main subunits: a, b and c.

It localises to the cell inner membrane. In terms of biological role, produces ATP from ADP in the presence of a proton gradient across the membrane. The gamma chain is believed to be important in regulating ATPase activity and the flow of protons through the CF(0) complex. The sequence is that of ATP synthase gamma chain from Buchnera aphidicola subsp. Acyrthosiphon pisum (strain APS) (Acyrthosiphon pisum symbiotic bacterium).